A 101-amino-acid polypeptide reads, in one-letter code: Urease subunit beta (101 aa).

Belongs to the urease beta subunit family. Heterotrimer of UreA (gamma), UreB (beta) and UreC (alpha) subunits. Three heterotrimers associate to form the active enzyme.

The protein resides in the cytoplasm. It catalyses the reaction urea + 2 H2O + H(+) = hydrogencarbonate + 2 NH4(+). It participates in nitrogen metabolism; urea degradation; CO(2) and NH(3) from urea (urease route): step 1/1. This Acaryochloris marina (strain MBIC 11017) protein is Urease subunit beta.